The following is a 366-amino-acid chain: Di-N-acetylchitobiase (366 aa).

An N-terminal signal peptide occupies residues 1–22 (MALCGLPEFTLLLLPLLARLSA). Positions 23–366 (GDCPCSEAAL…EMWGALKPRL (344 aa)) constitute a GH18 domain. Glu-127 (proton donor) is an active-site residue. N-linked (GlcNAc...) asparagine glycans are attached at residues Asn-131, Asn-177, Asn-212, Asn-246, and Asn-283.

The protein belongs to the glycosyl hydrolase 18 family.

It is found in the lysosome. Its function is as follows. Involved in the degradation of asparagine-linked glycoproteins. Hydrolyze of N-acetyl-beta-D-glucosamine (1-4)N-acetylglucosamine chitobiose core from the reducing end of the bond, it requires prior cleavage by glycosylasparaginase. This is Di-N-acetylchitobiase (Ctbs) from Mus musculus (Mouse).